The primary structure comprises 132 residues: ER membrane protein complex subunit 5 (132 aa).

The Cytoplasmic segment spans residues 1-3; sequence MAS. Residues 4–22 form a helical membrane-spanning segment; that stretch reads SIWKGLVGIGLFALAHAAF. At 23 to 43 the chain is on the lumenal side; sequence SAAQHRSYMRLTEKEDETLPI. The helical transmembrane segment at 44 to 63 threads the bilayer; the sequence is DIVLQTLLAFIVACYGIVHI. The Cytoplasmic portion of the chain corresponds to 64-132; that stretch reads AGEFKDMDAT…KLSKLESMHR (69 aa).

Belongs to the membrane magnesium transporter (TC 1.A.67) family. As to quaternary structure, component of the ER membrane protein complex (EMC).

It localises to the endoplasmic reticulum membrane. The protein localises to the golgi apparatus membrane. The protein resides in the early endosome membrane. Part of the endoplasmic reticulum membrane protein complex (EMC) that enables the energy-independent insertion into endoplasmic reticulum membranes of newly synthesized membrane proteins. Preferentially accommodates proteins with transmembrane domains that are weakly hydrophobic or contain destabilizing features such as charged and aromatic residues. Involved in the cotranslational insertion of multi-pass membrane proteins in which stop-transfer membrane-anchor sequences become ER membrane spanning helices. It is also required for the post-translational insertion of tail-anchored/TA proteins in endoplasmic reticulum membranes. By mediating the proper cotranslational insertion of N-terminal transmembrane domains in an N-exo topology, with translocated N-terminus in the lumen of the ER, controls the topology of multi-pass membrane proteins like the G protein-coupled receptors. By regulating the insertion of various proteins in membranes, it is indirectly involved in many cellular processes. May be involved in Mg(2+) transport. In Xenopus tropicalis (Western clawed frog), this protein is ER membrane protein complex subunit 5.